Here is a 118-residue protein sequence, read N- to C-terminus: Small ribosomal subunit protein uS13 (118 aa).

A disordered region spans residues 91–118; that stretch reads HRRGLPVRGQRTRTNARTRKGPRRPIKK.

It belongs to the universal ribosomal protein uS13 family. In terms of assembly, part of the 30S ribosomal subunit. Forms a loose heterodimer with protein S19. Forms two bridges to the 50S subunit in the 70S ribosome.

Functionally, located at the top of the head of the 30S subunit, it contacts several helices of the 16S rRNA. In the 70S ribosome it contacts the 23S rRNA (bridge B1a) and protein L5 of the 50S subunit (bridge B1b), connecting the 2 subunits; these bridges are implicated in subunit movement. Contacts the tRNAs in the A and P-sites. The sequence is that of Small ribosomal subunit protein uS13 from Methylococcus capsulatus (strain ATCC 33009 / NCIMB 11132 / Bath).